Here is a 317-residue protein sequence, read N- to C-terminus: Ricin B-like lectin EULS3 (317 aa).

Basic residues predominate over residues 1–11; it reads MEHHHQHHRHH. The interval 1–157 is disordered; that stretch reads MEHHHQHHRH…YHKPDENRLP (157 aa). Residues 25–36 show a composition bias toward pro residues; that stretch reads VPPPHVDAPPQP. Residues 136–146 are compositionally biased toward polar residues; sequence HSSNQPQSSSG. Positions 168-315 constitute a Ricin B-type lectin domain; the sequence is TVKVYSKAEP…KGDNQLWKIF (148 aa).

Interacts (via N-terminus) with ATS3A and ATS3B. In terms of tissue distribution, expressed in roots, rosette leaves, stems, cauline leaves and flowers.

The protein resides in the nucleus. Its subcellular location is the cytoplasm. Its function is as follows. Lectin which binds carbohydrates in vitro. Interacts through its lectin domain with glycan structures containing one or more Lewis X, Lewis Y or lactosamine motifs. May play a role in abiotic stress responses. May play a role in abscisic acid-induced stomatal closure. May play a role in disease resistance against Pseudomonas syringae through its involvement in stomatal movement. This chain is Ricin B-like lectin EULS3, found in Arabidopsis thaliana (Mouse-ear cress).